The chain runs to 571 residues: UvrABC system protein C (571 aa).

The GIY-YIG domain maps to 15 to 93 (TSPGVYLWKD…IDRYNPEFNI (79 aa)). Residues 184–219 (NNYINELTNKMHQAANNMQFELALFLRDGLTYLKKL) enclose the UVR domain.

This sequence belongs to the UvrC family. As to quaternary structure, interacts with UvrB in an incision complex.

Its subcellular location is the cytoplasm. Functionally, the UvrABC repair system catalyzes the recognition and processing of DNA lesions. UvrC both incises the 5' and 3' sides of the lesion. The N-terminal half is responsible for the 3' incision and the C-terminal half is responsible for the 5' incision. In Mycoplasmopsis bovis (strain ATCC 25523 / DSM 22781 / NCTC 10131 / PG45) (Mycoplasma bovis), this protein is UvrABC system protein C.